The following is a 1144-amino-acid chain: Nitric oxide synthase, inducible (1144 aa).

The DINNN-motif; mediates interaction with SPSB1, SPSB2 and SPSB4 signature appears at 23–27 (DINNN). The interval 37–59 (SPTIQDDPKSHQNGSPQLLTGTA) is disordered. Positions 47-59 (HQNGSPQLLTGTA) are enriched in polar residues. Residues Cys104 and Cys109 each coordinate Zn(2+). Ser112 lines the (6R)-L-erythro-5,6,7,8-tetrahydrobiopterin pocket. Cys194 provides a ligand contact to heme b. L-arginine-binding residues include Gln257, Trp366, Tyr367, and Glu371. (6R)-L-erythro-5,6,7,8-tetrahydrobiopterin-binding residues include Arg375, Ile456, Trp457, and Phe470. Tyr485 contributes to the heme b binding site. Positions 509-529 (FRVLVKVVFFASMLMRKVMAS) are calmodulin-binding. The Flavodoxin-like domain maps to 533 to 671 (ATVLFATETG…AFRSWAVQTF (139 aa)). 5 residues coordinate FMN: Thr539, Glu540, Thr541, Lys543, and Ser544. Tyr569 bears the Phosphotyrosine mark. Positions 585, 586, 622, 629, 655, and 659 each coordinate FMN. In terms of domain architecture, FAD-binding FR-type spans 724–964 (KNVFTMRLKS…VRSVSGFQLP (241 aa)). Arg744 is an NADP(+) binding site. Residues His766, Arg900, Tyr902, Ser903, Thr918, and Ala920 each coordinate FAD. Thr923 lines the NADP(+) pocket. Tyr924, Val937, Cys938, and Ser939 together coordinate FAD. Residues Thr978, Arg1011, Ser1040, Arg1041, Lys1047, Tyr1049, Gln1051, and Asp1084 each contribute to the NADP(+) site.

Belongs to the NOS family. As to quaternary structure, homodimer. Interacts with NHERF1. Interacts with GAPDH. Interacts with S100A8 and S100A9 to form the iNOS-S100A8/9 transnitrosylase complex. Interacts with SPSB1, SPSB2 and SPSB4. Interacts with ELOC and CUL5 in the presence of SPSB1 or SPSB2 or SPSB4. Forms a complex with ASL, ASS1 and HSP90AA1; the complex regulates cell-autonomous L-arginine synthesis and citrulline recycling while channeling extracellular L-arginine to nitric oxide synthesis pathway. Heme b serves as cofactor. Requires FAD as cofactor. It depends on FMN as a cofactor. The cofactor is (6R)-L-erythro-5,6,7,8-tetrahydrobiopterin. In terms of processing, polyubiquitinated; mediated by SPSB1, SPSB2 and SPSB4, leading to proteasomal degradation. Macrophages.

The protein localises to the cytoplasm. It localises to the cytosol. The enzyme catalyses 2 L-arginine + 3 NADPH + 4 O2 + H(+) = 2 L-citrulline + 2 nitric oxide + 3 NADP(+) + 4 H2O. Not stimulated by calcium/calmodulin. Aspirin inhibits expression and function of this enzyme and effects may be exerted at the level of translational/post-translational modification and directly on the catalytic activity. Functionally, produces nitric oxide (NO) which is a messenger molecule with diverse functions throughout the body. In macrophages, NO mediates tumoricidal and bactericidal actions. Also has nitrosylase activity and mediates cysteine S-nitrosylation of cytoplasmic target proteins such PTGS2/COX2. As component of the iNOS-S100A8/9 transnitrosylase complex involved in the selective inflammatory stimulus-dependent S-nitrosylation of GAPDH implicated in regulation of the GAIT complex activity and probably multiple targets including ANXA5, EZR, MSN and VIM. Involved in inflammation, enhances the synthesis of pro-inflammatory mediators such as IL6 and IL8. In Mus musculus (Mouse), this protein is Nitric oxide synthase, inducible (Nos2).